The sequence spans 448 residues: MFQALSDGFKNALNKIRFQDDEKALDRALDELKKTLLKNDVHHKVARELLKKVESQTKAGGIGKQQFLDALEKSLLEILSAKGSSGFTFAQTPPTVVLMAGLQGSGKTTTTAKLAHYLKTKNKKVLLCACDLQRLAAVEQLKVLGEQVGVEVFHEENKSVKEIANNALKRAKEAQFDVLIVDSAGRLAIDKELMQELKEVKEVLNPHEVLYVADALSGQDGVKSANTFNEEIGVSGVVLSKFDSDSKGGIALGITYQLGLPLRFIGSGEKIPDLDVFMPERIVGRLMGAGDIISLAEKTASVLNPNEAKDLSKKLKKGQFTFNDFLNQIEKVKKLGSMSSLISMIPGLGNMASALKDTDLESSLEVKKIKAMVNSMTKKERENPEILNGSRRKRIALGSGLEVSEINRIIKRFDQASKMAKRLTNKKGISDLMNLMSQAKNQTPPKMR.

Residues 101 to 108 (GLQGSGKT), 182 to 186 (DSAGR), and 240 to 243 (SKFD) each bind GTP.

This sequence belongs to the GTP-binding SRP family. SRP54 subfamily. As to quaternary structure, part of the signal recognition particle protein translocation system, which is composed of SRP and FtsY. SRP is a ribonucleoprotein composed of Ffh and a 4.5S RNA molecule.

It localises to the cytoplasm. It catalyses the reaction GTP + H2O = GDP + phosphate + H(+). In terms of biological role, involved in targeting and insertion of nascent membrane proteins into the cytoplasmic membrane. Binds to the hydrophobic signal sequence of the ribosome-nascent chain (RNC) as it emerges from the ribosomes. The SRP-RNC complex is then targeted to the cytoplasmic membrane where it interacts with the SRP receptor FtsY. Interaction with FtsY leads to the transfer of the RNC complex to the Sec translocase for insertion into the membrane, the hydrolysis of GTP by both Ffh and FtsY, and the dissociation of the SRP-FtsY complex into the individual components. The sequence is that of Signal recognition particle protein from Helicobacter pylori (strain J99 / ATCC 700824) (Campylobacter pylori J99).